The chain runs to 174 residues: FMN reductase (NADH) RutF (174 aa).

It belongs to the non-flavoprotein flavin reductase family. RutF subfamily.

It carries out the reaction FMNH2 + NAD(+) = FMN + NADH + 2 H(+). In terms of biological role, catalyzes the reduction of FMN to FMNH2 which is used to reduce pyrimidine by RutA via the Rut pathway. This chain is FMN reductase (NADH) RutF, found in Agrobacterium fabrum (strain C58 / ATCC 33970) (Agrobacterium tumefaciens (strain C58)).